Here is an 862-residue protein sequence, read N- to C-terminus: Protein SEY1 (862 aa).

The Cytoplasmic segment spans residues 1–747 (MVSNGHFASA…KRSAIGGMTQ (747 aa)). The region spanning 49 to 306 (GFNYHLISVF…IPADGFAVYA (258 aa)) is the GB1/RHD3-type G domain. Residue 59–66 (GSQSTGKS) coordinates GTP. Residues 481–507 (SNYTQELALYQKDLEKISAQLRKDEMR) adopt a coiled-coil conformation. A helical transmembrane segment spans residues 748-768 (IPVYFYILLLALGWNEIVAVL). Residues 769-771 (RNP) lie on the Lumenal side of the membrane. Residues 772-792 (LYFFMLFLCAVGAFVTYQLNL) form a helical membrane-spanning segment. At 793-862 (WGPMIKMAEA…DDDDEDEGSW (70 aa)) the chain is on the cytoplasmic side. The interval 819–862 (LEPSEAGPHAARYKNSTEEYEMSNVKAPQRTNSGDDDDEDEGSW) is disordered. The segment covering 852-862 (GDDDDEDEGSW) has biased composition (acidic residues).

It belongs to the TRAFAC class dynamin-like GTPase superfamily. GB1/RHD3 GTPase family. RHD3 subfamily.

It is found in the endoplasmic reticulum membrane. In terms of biological role, cooperates with the reticulon proteins and tubule-shaping DP1 family proteins to generate and maintain the structure of the tubular endoplasmic reticulum network. Has GTPase activity, which is required for its function in ER organization. This chain is Protein SEY1, found in Uncinocarpus reesii (strain UAMH 1704).